Reading from the N-terminus, the 67-residue chain is MPKLKTKSGVKKRFKLTATGKVKHGVAGKRHRLISHNSKYIRTNRGTTVLAEADTARVKLWAPYGLN.

This sequence belongs to the bacterial ribosomal protein bL35 family.

This Rhizorhabdus wittichii (strain DSM 6014 / CCUG 31198 / JCM 15750 / NBRC 105917 / EY 4224 / RW1) (Sphingomonas wittichii) protein is Large ribosomal subunit protein bL35.